Here is a 364-residue protein sequence, read N- to C-terminus: Chorismate synthase (364 aa).

Position 47 (Arg47) interacts with NADP(+). Residues 125–127 (RFS), Gly285, 300–304 (KPTPS), and Arg327 contribute to the FMN site.

The protein belongs to the chorismate synthase family. Homotetramer. FMNH2 serves as cofactor.

The enzyme catalyses 5-O-(1-carboxyvinyl)-3-phosphoshikimate = chorismate + phosphate. Its pathway is metabolic intermediate biosynthesis; chorismate biosynthesis; chorismate from D-erythrose 4-phosphate and phosphoenolpyruvate: step 7/7. Catalyzes the anti-1,4-elimination of the C-3 phosphate and the C-6 proR hydrogen from 5-enolpyruvylshikimate-3-phosphate (EPSP) to yield chorismate, which is the branch point compound that serves as the starting substrate for the three terminal pathways of aromatic amino acid biosynthesis. This reaction introduces a second double bond into the aromatic ring system. This is Chorismate synthase from Dehalococcoides mccartyi (strain ATCC BAA-2266 / KCTC 15142 / 195) (Dehalococcoides ethenogenes (strain 195)).